We begin with the raw amino-acid sequence, 64 residues long: Large ribosomal subunit protein uL30 (64 aa).

The segment at 1 to 22 (MAKAAKTIKVEQTGSAIRRHHS) is disordered.

The protein belongs to the universal ribosomal protein uL30 family. Part of the 50S ribosomal subunit.

The protein is Large ribosomal subunit protein uL30 of Nitrobacter winogradskyi (strain ATCC 25391 / DSM 10237 / CIP 104748 / NCIMB 11846 / Nb-255).